The following is a 30-amino-acid chain: Cytochrome b6-f complex subunit 8 (30 aa).

A helical transmembrane segment spans residues isoleucine 4–valine 24.

Belongs to the PetN family. The 4 large subunits of the cytochrome b6-f complex are cytochrome b6, subunit IV (17 kDa polypeptide, PetD), cytochrome f and the Rieske protein, while the 4 small subunits are PetG, PetL, PetM and PetN. The complex functions as a dimer.

It localises to the plastid. The protein localises to the chloroplast thylakoid membrane. In terms of biological role, component of the cytochrome b6-f complex, which mediates electron transfer between photosystem II (PSII) and photosystem I (PSI), cyclic electron flow around PSI, and state transitions. The polypeptide is Cytochrome b6-f complex subunit 8 (Gracilaria tenuistipitata var. liui (Red alga)).